A 148-amino-acid polypeptide reads, in one-letter code: MVNIIEQLEKEQIEKLTADRGVPSFAPGDTLKVNVKVIEGNRERVQAYEGVCIARKNDGLNSSFVVRKISYGEGVERIFPLYSPNIASIEVVRRGDVRRAKLYYLRDRRGKSARIAEQTTGHSGKVAAAERADAAAVKAAKVAAAKVE.

Belongs to the bacterial ribosomal protein bL19 family.

This protein is located at the 30S-50S ribosomal subunit interface and may play a role in the structure and function of the aminoacyl-tRNA binding site. The sequence is that of Large ribosomal subunit protein bL19 from Paramagnetospirillum magneticum (strain ATCC 700264 / AMB-1) (Magnetospirillum magneticum).